The sequence spans 86 residues: Insulin (86 aa).

Cystine bridges form between Cys-7-Cys-72, Cys-19-Cys-85, and Cys-71-Cys-76. A propeptide spans 33–63 (ELEDPQVGQADPGVVPEAGRLQPLALEMTLQ) (c peptide).

It belongs to the insulin family. In terms of assembly, heterodimer of a B chain and an A chain linked by two disulfide bonds.

Its subcellular location is the secreted. Its function is as follows. Insulin decreases blood glucose concentration. It increases cell permeability to monosaccharides, amino acids and fatty acids. It accelerates glycolysis, the pentose phosphate cycle, and glycogen synthesis in liver. This Chinchilla chinchilla (Short-tailed chinchilla) protein is Insulin (INS).